An 871-amino-acid polypeptide reads, in one-letter code: DNA mismatch repair protein MutS (871 aa).

616–623 (GPNMAGKS) contributes to the ATP binding site. Residues 801 to 825 (ETEKTEESMEGTNLPKKKKEEKTSS) form a disordered region.

This sequence belongs to the DNA mismatch repair MutS family.

Its function is as follows. This protein is involved in the repair of mismatches in DNA. It is possible that it carries out the mismatch recognition step. This protein has a weak ATPase activity. The chain is DNA mismatch repair protein MutS from Clostridium kluyveri (strain NBRC 12016).